The following is a 220-amino-acid chain: NADH-quinone oxidoreductase subunit B (220 aa).

[4Fe-4S] cluster contacts are provided by Cys-37, Cys-38, Cys-103, and Cys-132. Positions 174 to 220 (PSSERYAPKNRSQRKLAERQQAAQRREMGAEKPLGALEERAELNAGR) are disordered. Positions 210-220 (LEERAELNAGR) are enriched in basic and acidic residues.

Belongs to the complex I 20 kDa subunit family. In terms of assembly, NDH-1 is composed of 14 different subunits. Subunits NuoB, C, D, E, F, and G constitute the peripheral sector of the complex. It depends on [4Fe-4S] cluster as a cofactor.

It is found in the cell membrane. It catalyses the reaction a quinone + NADH + 5 H(+)(in) = a quinol + NAD(+) + 4 H(+)(out). Functionally, NDH-1 shuttles electrons from NADH, via FMN and iron-sulfur (Fe-S) centers, to quinones in the respiratory chain. The immediate electron acceptor for the enzyme in this species is believed to be a menaquinone. Couples the redox reaction to proton translocation (for every two electrons transferred, four hydrogen ions are translocated across the cytoplasmic membrane), and thus conserves the redox energy in a proton gradient. This is NADH-quinone oxidoreductase subunit B from Saccharopolyspora erythraea (strain ATCC 11635 / DSM 40517 / JCM 4748 / NBRC 13426 / NCIMB 8594 / NRRL 2338).